Here is a 372-residue protein sequence, read N- to C-terminus: Anhydro-N-acetylmuramic acid kinase (372 aa).

12-19 (GTSMDALD) serves as a coordination point for ATP.

Belongs to the anhydro-N-acetylmuramic acid kinase family.

It carries out the reaction 1,6-anhydro-N-acetyl-beta-muramate + ATP + H2O = N-acetyl-D-muramate 6-phosphate + ADP + H(+). It functions in the pathway amino-sugar metabolism; 1,6-anhydro-N-acetylmuramate degradation. The protein operates within cell wall biogenesis; peptidoglycan recycling. Its function is as follows. Catalyzes the specific phosphorylation of 1,6-anhydro-N-acetylmuramic acid (anhMurNAc) with the simultaneous cleavage of the 1,6-anhydro ring, generating MurNAc-6-P. Is required for the utilization of anhMurNAc either imported from the medium or derived from its own cell wall murein, and thus plays a role in cell wall recycling. This chain is Anhydro-N-acetylmuramic acid kinase, found in Coxiella burnetii (strain CbuK_Q154) (Coxiella burnetii (strain Q154)).